The primary structure comprises 159 residues: 2-C-methyl-D-erythritol 2,4-cyclodiphosphate synthase (159 aa).

D10 and H12 together coordinate a divalent metal cation. Residues 10–12 (DVH) and 36–37 (HS) contribute to the 4-CDP-2-C-methyl-D-erythritol 2-phosphate site. H44 contributes to the a divalent metal cation binding site. Residues 58–60 (DIG), 63–67 (FSDTD), and R144 each bind 4-CDP-2-C-methyl-D-erythritol 2-phosphate.

Belongs to the IspF family. Homotrimer. A divalent metal cation is required as a cofactor.

The catalysed reaction is 4-CDP-2-C-methyl-D-erythritol 2-phosphate = 2-C-methyl-D-erythritol 2,4-cyclic diphosphate + CMP. The protein operates within isoprenoid biosynthesis; isopentenyl diphosphate biosynthesis via DXP pathway; isopentenyl diphosphate from 1-deoxy-D-xylulose 5-phosphate: step 4/6. Functionally, involved in the biosynthesis of isopentenyl diphosphate (IPP) and dimethylallyl diphosphate (DMAPP), two major building blocks of isoprenoid compounds. Catalyzes the conversion of 4-diphosphocytidyl-2-C-methyl-D-erythritol 2-phosphate (CDP-ME2P) to 2-C-methyl-D-erythritol 2,4-cyclodiphosphate (ME-CPP) with a corresponding release of cytidine 5-monophosphate (CMP). The sequence is that of 2-C-methyl-D-erythritol 2,4-cyclodiphosphate synthase from Paraburkholderia xenovorans (strain LB400).